The primary structure comprises 335 residues: Putative T-box protein 7 (335 aa).

Positions 73–246 form a DNA-binding region, T-box; that stretch reads LWSTFLECGT…NNPFAKGFRN (174 aa).

It is found in the nucleus. This Caenorhabditis elegans protein is Putative T-box protein 7.